The following is a 346-amino-acid chain: Extracellular protease (346 aa).

An N-terminal signal peptide occupies residues 1–21 (MMKATPIALLLAGVLASPLCA). Histidine 296 provides a ligand contact to Zn(2+). Glutamate 297 is a catalytic residue. Zn(2+) is bound by residues histidine 300 and aspartate 309.

Belongs to the peptidase M35 family. Zn(2+) serves as cofactor.

Heat-labile protease. The sequence is that of Extracellular protease from Aeromonas hydrophila.